Reading from the N-terminus, the 457-residue chain is Argininosuccinate lyase (457 aa).

Belongs to the lyase 1 family. Argininosuccinate lyase subfamily.

It is found in the cytoplasm. It catalyses the reaction 2-(N(omega)-L-arginino)succinate = fumarate + L-arginine. It functions in the pathway amino-acid biosynthesis; L-arginine biosynthesis; L-arginine from L-ornithine and carbamoyl phosphate: step 3/3. In Yersinia pseudotuberculosis serotype O:1b (strain IP 31758), this protein is Argininosuccinate lyase.